Consider the following 72-residue polypeptide: Large ribosomal subunit protein bL28 (72 aa).

Belongs to the bacterial ribosomal protein bL28 family.

The polypeptide is Large ribosomal subunit protein bL28 (Chlorobium chlorochromatii (strain CaD3)).